The following is a 743-amino-acid chain: Threonine synthase-like 1 (743 aa).

Lys281 carries the post-translational modification N6-acetyllysine. Lys351 is subject to N6-(pyridoxal phosphate)lysine.

This sequence belongs to the threonine synthase family. Requires pyridoxal 5'-phosphate as cofactor.

The protein is Threonine synthase-like 1 (THNSL1) of Macaca fascicularis (Crab-eating macaque).